The chain runs to 65 residues: Metallothionein-3 (65 aa).

Met-1 is modified (N-acetylmethionine). Residues 1–30 (MDPEACPCPTGGSCTCSDSCKCEGCTCASS) are beta. The a divalent metal cation site is built by Cys-6, Cys-8, Cys-14, Cys-16, Cys-20, Cys-22, Cys-25, and Cys-27. Residues 31 to 65 (KKSCCPAECEKCAKDCVCKGGEGAEAEEKKCGCCQ) are alpha. At Ser-33 the chain carries Phosphoserine. A divalent metal cation-binding residues include Cys-34, Cys-35, Cys-39, Cys-42, Cys-46, Cys-48, Cys-61, Cys-63, and Cys-64.

The protein belongs to the metallothionein superfamily. Type 1 family.

In terms of biological role, binds heavy metals. Contains five zinc and one copper atoms per polypeptide chain and only a negligible amount of cadmium. The chain is Metallothionein-3 (MT3) from Ovis aries (Sheep).